Reading from the N-terminus, the 63-residue chain is Arabinogalactan peptide 3 (63 aa).

A signal peptide spans 1–26 (MASRILYAAAVVAAVAVSSLAGVAYA). S36 carries GPI-anchor amidated serine lipidation. A propeptide spans 37-63 (GAAAVSSSLVAAVLCPAVALLLGNLRQ) (removed in mature form).

The protein belongs to the AG-peptide AGP family. O-glycosylated on hydroxyprolines; noncontiguous hydroxylproline residues are glycosylated with arabinogalactan. As to expression, expressed in roots, stems, leaves, flowers and seeds.

The protein resides in the vacuole. It is found in the aleurone grain membrane. In terms of biological role, proteoglycan that seems to be implicated in diverse developmental roles such as differentiation, cell-cell recognition, embryogenesis and programmed cell death. The polypeptide is Arabinogalactan peptide 3 (AGPEP3) (Oryza sativa subsp. japonica (Rice)).